We begin with the raw amino-acid sequence, 212 residues long: Peptide methionine sulfoxide reductase MsrA (212 aa).

Cys-52 is a catalytic residue.

This sequence belongs to the MsrA Met sulfoxide reductase family.

It carries out the reaction L-methionyl-[protein] + [thioredoxin]-disulfide + H2O = L-methionyl-(S)-S-oxide-[protein] + [thioredoxin]-dithiol. The enzyme catalyses [thioredoxin]-disulfide + L-methionine + H2O = L-methionine (S)-S-oxide + [thioredoxin]-dithiol. Functionally, has an important function as a repair enzyme for proteins that have been inactivated by oxidation. Catalyzes the reversible oxidation-reduction of methionine sulfoxide in proteins to methionine. The chain is Peptide methionine sulfoxide reductase MsrA from Escherichia fergusonii (strain ATCC 35469 / DSM 13698 / CCUG 18766 / IAM 14443 / JCM 21226 / LMG 7866 / NBRC 102419 / NCTC 12128 / CDC 0568-73).